A 166-amino-acid polypeptide reads, in one-letter code: Large ribosomal subunit protein uL10 (166 aa).

The protein belongs to the universal ribosomal protein uL10 family. Part of the ribosomal stalk of the 50S ribosomal subunit. The N-terminus interacts with L11 and the large rRNA to form the base of the stalk. The C-terminus forms an elongated spine to which L12 dimers bind in a sequential fashion forming a multimeric L10(L12)X complex.

Its function is as follows. Forms part of the ribosomal stalk, playing a central role in the interaction of the ribosome with GTP-bound translation factors. This Streptococcus agalactiae serotype V (strain ATCC BAA-611 / 2603 V/R) protein is Large ribosomal subunit protein uL10.